A 628-amino-acid polypeptide reads, in one-letter code: tRNA uridine 5-carboxymethylaminomethyl modification enzyme MnmG (628 aa).

13 to 18 (GAGHAG) contributes to the FAD binding site. 281 to 295 (GARYCPSIEDKIKKF) provides a ligand contact to NAD(+).

Belongs to the MnmG family. Homodimer. Heterotetramer of two MnmE and two MnmG subunits. The cofactor is FAD.

It is found in the cytoplasm. In terms of biological role, NAD-binding protein involved in the addition of a carboxymethylaminomethyl (cmnm) group at the wobble position (U34) of certain tRNAs, forming tRNA-cmnm(5)s(2)U34. The sequence is that of tRNA uridine 5-carboxymethylaminomethyl modification enzyme MnmG from Treponema denticola (strain ATCC 35405 / DSM 14222 / CIP 103919 / JCM 8153 / KCTC 15104).